Reading from the N-terminus, the 1122-residue chain is Phytochrome A (1122 aa).

Polar residues predominate over residues 1 to 11 (MSGSRPTQSSE). Residues 1–21 (MSGSRPTQSSEGSRRSRHSAR) are disordered. Residues 218 to 402 (SMERLCDTMV…VFAIHVNKEV (185 aa)) enclose the GAF domain. Residue C323 coordinates phytochromobilin. The PAS 1 domain occupies 618-688 (VTSEMVRLIE…RMLENALEGT (71 aa)). The PAC domain occupies 695 to 747 (FEIKTHLSRADAGPISLVVNACASRDLHENVVGVCFVAHDLTGQKTVMDKFTR). Positions 748–822 (IEGDYKAIIQ…KNQEAFVNLG (75 aa)) constitute a PAS 2 domain. A Histidine kinase domain is found at 902–1119 (YIKRQIRNPL…SFIITAELAA (218 aa)).

This sequence belongs to the phytochrome family. As to quaternary structure, homodimer. Interacts with NDPK2 and PKS4. Stabilized by interactions with PAPP5 and FYPP3 which are enhanced in the phosphorylated Pfr form. Interacts with COP1/SPA1 complex. Binds, via its photosensory domain, to PTAC12/HMR when photoactivated; this interaction stimulates its localization to photobodies. Interacts with FHY1, FHL and FHY3, especially upon far-red (FR) light illumination; when underphosphorylated. Forms PHYA/FHY1/HFR1 complex. Binds to PIF3/PAP3. Phosphorylated. In terms of processing, contains one covalently linked phytochromobilin chromophore. As to expression, expressed in fruits, flowers, leaves, stems, seedlings and roots.

It localises to the cytoplasm. It is found in the nucleus. The protein resides in the nucleoplasm. Its subcellular location is the nucleus speckle. Its function is as follows. Regulatory photoreceptor which exists in two forms that are reversibly interconvertible by light: the Pr form that absorbs maximally in the red region of the spectrum and the Pfr form that absorbs maximally in the far-red region. Photoconversion of Pr to Pfr induces an array of morphogenetic responses, whereas reconversion of Pfr to Pr cancels the induction of those responses. Pfr controls the expression of a number of nuclear genes including those encoding the small subunit of ribulose-bisphosphate carboxylase, chlorophyll A/B binding protein, protochlorophyllide reductase, rRNA, etc. It also controls the expression of its own gene(s) in a negative feedback fashion. Involved in the flowering time regulation. Can phosphorylate FHY1 and, possibly, FHL, in red light conditions; this inactivates their co-shuttling to the nucleus. Regulates phototropic responses both in the nucleus (e.g. hypocotyl elongation and cotyledon opening under high-irradiance conditions and seed germination under very-low-fluence conditions) and in the cytoplasm (e.g. negative gravitropism in blue light and red-enhanced phototropism). Promotes seed germination, suppression of hypocotyl elongation, and randomization of hypocotyl growth orientation in far-red light; these responses to far-red light are repressed by UNE10/PIF8. Stabilizes UNE10/PIF8 but sequesters PIF3/PAP3 from its target genes promoters in far-red light. The polypeptide is Phytochrome A (Arabidopsis thaliana (Mouse-ear cress)).